The chain runs to 688 residues: Methionine--tRNA ligase (688 aa).

A 'HIGH' region motif is present at residues Pro13–His23. Residues Cys144, Cys147, Cys157, and Cys160 each contribute to the Zn(2+) site. A 'KMSKS' region motif is present at residues Lys342–Ser346. Lys345 contacts ATP. In terms of domain architecture, tRNA-binding spans Asp582–His688.

Belongs to the class-I aminoacyl-tRNA synthetase family. MetG type 1 subfamily. As to quaternary structure, homodimer. It depends on Zn(2+) as a cofactor.

The protein localises to the cytoplasm. The enzyme catalyses tRNA(Met) + L-methionine + ATP = L-methionyl-tRNA(Met) + AMP + diphosphate. Functionally, is required not only for elongation of protein synthesis but also for the initiation of all mRNA translation through initiator tRNA(fMet) aminoacylation. The chain is Methionine--tRNA ligase from Acidovorax ebreus (strain TPSY) (Diaphorobacter sp. (strain TPSY)).